The following is a 248-amino-acid chain: 3-deoxy-manno-octulosonate cytidylyltransferase (248 aa).

This sequence belongs to the KdsB family.

It is found in the cytoplasm. It catalyses the reaction 3-deoxy-alpha-D-manno-oct-2-ulosonate + CTP = CMP-3-deoxy-beta-D-manno-octulosonate + diphosphate. It participates in nucleotide-sugar biosynthesis; CMP-3-deoxy-D-manno-octulosonate biosynthesis; CMP-3-deoxy-D-manno-octulosonate from 3-deoxy-D-manno-octulosonate and CTP: step 1/1. Its pathway is bacterial outer membrane biogenesis; lipopolysaccharide biosynthesis. Functionally, activates KDO (a required 8-carbon sugar) for incorporation into bacterial lipopolysaccharide in Gram-negative bacteria. This chain is 3-deoxy-manno-octulosonate cytidylyltransferase, found in Alteromonas mediterranea (strain DSM 17117 / CIP 110805 / LMG 28347 / Deep ecotype).